The following is a 209-amino-acid chain: Small ribosomal subunit protein uS4 (209 aa).

The 62-residue stretch at Arg-98 to Asp-159 folds into the S4 RNA-binding domain.

The protein belongs to the universal ribosomal protein uS4 family. In terms of assembly, part of the 30S ribosomal subunit. Contacts protein S5. The interaction surface between S4 and S5 is involved in control of translational fidelity.

Its function is as follows. One of the primary rRNA binding proteins, it binds directly to 16S rRNA where it nucleates assembly of the body of the 30S subunit. With S5 and S12 plays an important role in translational accuracy. This Syntrophotalea carbinolica (strain DSM 2380 / NBRC 103641 / GraBd1) (Pelobacter carbinolicus) protein is Small ribosomal subunit protein uS4.